A 287-amino-acid polypeptide reads, in one-letter code: 2-dehydro-3-deoxyphosphooctonate aldolase (287 aa).

It belongs to the KdsA family.

The protein localises to the cytoplasm. It catalyses the reaction D-arabinose 5-phosphate + phosphoenolpyruvate + H2O = 3-deoxy-alpha-D-manno-2-octulosonate-8-phosphate + phosphate. Its pathway is carbohydrate biosynthesis; 3-deoxy-D-manno-octulosonate biosynthesis; 3-deoxy-D-manno-octulosonate from D-ribulose 5-phosphate: step 2/3. It functions in the pathway bacterial outer membrane biogenesis; lipopolysaccharide biosynthesis. This is 2-dehydro-3-deoxyphosphooctonate aldolase from Leptospira interrogans serogroup Icterohaemorrhagiae serovar copenhageni (strain Fiocruz L1-130).